The sequence spans 205 residues: MARSGRYKVPFRRRREGLTNYRKRRKLLLSKKPRLVVRKTNKHIIAQIVVAKPQGDVTIVGADTRILAKFGWRGDENNVAAAYLLGLVVGYKARARRVEEAILDIGLHRPAPGARVFAVLKGALDAGLKIPHGEEVLPDEDRIKGKHVAEYAEKLKEENPEAYKARFSRYLQRGLEPEKLPEHFEEVKKKIVEYYEKKLAKVAAQ.

The protein belongs to the universal ribosomal protein uL18 family. As to quaternary structure, part of the 50S ribosomal subunit. Contacts the 5S and 23S rRNAs.

Functionally, this is one of the proteins that bind and probably mediate the attachment of the 5S RNA into the large ribosomal subunit, where it forms part of the central protuberance. This Pyrobaculum aerophilum (strain ATCC 51768 / DSM 7523 / JCM 9630 / CIP 104966 / NBRC 100827 / IM2) protein is Large ribosomal subunit protein uL18.